The sequence spans 149 residues: D-aminoacyl-tRNA deacylase (149 aa).

A Gly-cisPro motif, important for rejection of L-amino acids motif is present at residues 137-138; it reads GP.

The protein belongs to the DTD family. Homodimer.

Its subcellular location is the cytoplasm. The catalysed reaction is glycyl-tRNA(Ala) + H2O = tRNA(Ala) + glycine + H(+). It catalyses the reaction a D-aminoacyl-tRNA + H2O = a tRNA + a D-alpha-amino acid + H(+). Functionally, an aminoacyl-tRNA editing enzyme that deacylates mischarged D-aminoacyl-tRNAs. Also deacylates mischarged glycyl-tRNA(Ala), protecting cells against glycine mischarging by AlaRS. Acts via tRNA-based rather than protein-based catalysis; rejects L-amino acids rather than detecting D-amino acids in the active site. By recycling D-aminoacyl-tRNA to D-amino acids and free tRNA molecules, this enzyme counteracts the toxicity associated with the formation of D-aminoacyl-tRNA entities in vivo and helps enforce protein L-homochirality. This is D-aminoacyl-tRNA deacylase from Thermoanaerobacter sp. (strain X514).